Reading from the N-terminus, the 412-residue chain is Methylmalonic aciduria type A homolog, mitochondrial (412 aa).

A mitochondrion-targeting transit peptide spans 1-15 (MVVRALVRAHPLSRI). GTP is bound by residues 132–140 (GSPGVGKSS), D275, and 311–313 (SIM).

It belongs to the SIMIBI class G3E GTPase family. ArgK/MeaB subfamily.

The protein localises to the mitochondrion. In terms of biological role, may have GTPase activity. May also bind and hydrolyze ATP. May function as chaperone. Likely to have a role in propionyl-CoA metabolism and adenosylcobalamin synthesis. This Caenorhabditis briggsae protein is Methylmalonic aciduria type A homolog, mitochondrial.